A 345-amino-acid polypeptide reads, in one-letter code: 3-dehydroquinate synthase (345 aa).

It belongs to the archaeal-type DHQ synthase family.

It carries out the reaction 2-amino-2,3,7-trideoxy-D-lyxo-hept-6-ulosonate + NAD(+) + H2O = 3-dehydroquinate + NH4(+) + NADH + H(+). In terms of biological role, catalyzes the oxidative deamination and cyclization of 2-amino-3,7-dideoxy-D-threo-hept-6-ulosonic acid (ADH) to yield 3-dehydroquinate (DHQ), which is fed into the canonical shikimic pathway of aromatic amino acid biosynthesis. This chain is 3-dehydroquinate synthase, found in Methanocorpusculum labreanum (strain ATCC 43576 / DSM 4855 / Z).